An 82-amino-acid polypeptide reads, in one-letter code: Small ribosomal subunit protein bS16 (82 aa).

This sequence belongs to the bacterial ribosomal protein bS16 family.

The chain is Small ribosomal subunit protein bS16 from Dehalococcoides mccartyi (strain ATCC BAA-2266 / KCTC 15142 / 195) (Dehalococcoides ethenogenes (strain 195)).